The following is a 251-amino-acid chain: tRNA (guanine-N(7)-)-methyltransferase (251 aa).

S-adenosyl-L-methionine is bound by residues Glu69, Glu94, Asp121, and Asp143. The active site involves Asp143. Substrate is bound by residues Lys147 and Asp179.

The protein belongs to the class I-like SAM-binding methyltransferase superfamily. TrmB family.

The enzyme catalyses guanosine(46) in tRNA + S-adenosyl-L-methionine = N(7)-methylguanosine(46) in tRNA + S-adenosyl-L-homocysteine. It participates in tRNA modification; N(7)-methylguanine-tRNA biosynthesis. In terms of biological role, catalyzes the formation of N(7)-methylguanine at position 46 (m7G46) in tRNA. This Rhodopseudomonas palustris (strain BisB18) protein is tRNA (guanine-N(7)-)-methyltransferase.